A 334-amino-acid polypeptide reads, in one-letter code: Glycerol-3-phosphate dehydrogenase [NAD(P)+] (334 aa).

Residues serine 11, tryptophan 12, arginine 32, and lysine 106 each contribute to the NADPH site. Residues lysine 106 and glycine 136 each contribute to the sn-glycerol 3-phosphate site. Alanine 140 provides a ligand contact to NADPH. Positions 191, 244, 254, 255, and 256 each coordinate sn-glycerol 3-phosphate. Lysine 191 acts as the Proton acceptor in catalysis. Position 255 (arginine 255) interacts with NADPH. NADPH is bound by residues valine 279 and glutamate 281.

The protein belongs to the NAD-dependent glycerol-3-phosphate dehydrogenase family.

The protein resides in the cytoplasm. The enzyme catalyses sn-glycerol 3-phosphate + NAD(+) = dihydroxyacetone phosphate + NADH + H(+). It carries out the reaction sn-glycerol 3-phosphate + NADP(+) = dihydroxyacetone phosphate + NADPH + H(+). The protein operates within membrane lipid metabolism; glycerophospholipid metabolism. Its function is as follows. Catalyzes the reduction of the glycolytic intermediate dihydroxyacetone phosphate (DHAP) to sn-glycerol 3-phosphate (G3P), the key precursor for phospholipid synthesis. This is Glycerol-3-phosphate dehydrogenase [NAD(P)+] from Parafrankia sp. (strain EAN1pec).